Here is a 604-residue protein sequence, read N- to C-terminus: UvrABC system protein C (604 aa).

The GIY-YIG domain occupies Ala-17 to Ile-95. One can recognise a UVR domain in the interval Asp-204–Ile-239.

The protein belongs to the UvrC family. Interacts with UvrB in an incision complex.

The protein resides in the cytoplasm. Functionally, the UvrABC repair system catalyzes the recognition and processing of DNA lesions. UvrC both incises the 5' and 3' sides of the lesion. The N-terminal half is responsible for the 3' incision and the C-terminal half is responsible for the 5' incision. The sequence is that of UvrABC system protein C from Nitrosomonas europaea (strain ATCC 19718 / CIP 103999 / KCTC 2705 / NBRC 14298).